Here is a 475-residue protein sequence, read N- to C-terminus: Probable proline--tRNA ligase, mitochondrial (475 aa).

The N-terminal 29 residues, 1 to 29 (MEGLLTRCRTLSALAACSLRHCRYIIHKC), are a transit peptide targeting the mitochondrion.

This sequence belongs to the class-II aminoacyl-tRNA synthetase family.

The protein resides in the mitochondrion matrix. The catalysed reaction is tRNA(Pro) + L-proline + ATP = L-prolyl-tRNA(Pro) + AMP + diphosphate. Mitochondrial aminoacyl-tRNA synthetase that catalyzes the specific attachment of the proline amino acid (aa) to the homologous transfer RNA (tRNA), further participating in protein synthesis. The reaction occurs in a two steps: proline is first activated by ATP to form Pro-AMP and then transferred to the acceptor end of tRNA(Pro). This Mus musculus (Mouse) protein is Probable proline--tRNA ligase, mitochondrial (Pars2).